Consider the following 291-residue polypeptide: Arabinogalactan O-methyltransferase 2 (291 aa).

Residues 18–38 (WFLAVALAGLIGGAMLITSFI) traverse the membrane as a helical segment.

It belongs to the methyltransferase superfamily.

Its subcellular location is the golgi apparatus membrane. In terms of biological role, involved in the methylation of glucuronic acid of different plant cell wall component, but mainly on side chains of arabinogalactans. In Arabidopsis thaliana (Mouse-ear cress), this protein is Arabinogalactan O-methyltransferase 2.